Reading from the N-terminus, the 170-residue chain is Myosin regulatory light chain 11 (170 aa).

Ala2 bears the N,N,N-trimethylalanine mark. A phosphoserine mark is found at Ser16 and Ser17. A phosphothreonine mark is found at Thr26 and Thr36. An EF-hand 1 domain is found at 26–61 (TQIQEFKEAFTVIDQNRDGIIDKEDLRDTFAAMGRL). Positions 39, 41, 43, and 50 each coordinate Ca(2+). At Ser76 the chain carries Phosphoserine. EF-hand domains are found at residues 96–131 (DPED…QCDR) and 132–167 (FSQE…GDAK). Thr102 bears the Phosphothreonine mark.

Myosin is a hexamer of 2 heavy chains and 4 light chains. Post-translationally, n,N,N-trimethylalanine found in this myosin light chain would not have been detected in the N-terminal tryptic peptide in PubMed:863872 and PubMed:352892 because it would remain trimethylated and ninhydrin negative after hydrolysis.

Its function is as follows. Myosin regulatory subunit that plays an essential role to maintain muscle integrity during early development. Plays a role in muscle contraction. This Oryctolagus cuniculus (Rabbit) protein is Myosin regulatory light chain 11 (MYL11).